A 437-amino-acid chain; its full sequence is Trypacidin cluster transcriptional coactivator tpcD (437 aa).

The HTH iclR-type domain occupies 75–144; sequence LAVQSQLLSC…PQRGHVAHSP (70 aa). A DNA-binding region (H-T-H motif) is located at residues 105–124; sequence IADLARLSGVPEAQLARIIR.

Specifically expressed in conidia.

Its subcellular location is the nucleus. In terms of biological role, transcriptional coactivator; part of the gene cluster that mediates the biosynthesis of trypacidin, a mycotoxin with antiprotozoal activity and that plays a role in the infection process. With tpcE, coregulates the production of trypacidin. This chain is Trypacidin cluster transcriptional coactivator tpcD, found in Aspergillus fumigatus (strain ATCC MYA-4609 / CBS 101355 / FGSC A1100 / Af293) (Neosartorya fumigata).